A 74-amino-acid polypeptide reads, in one-letter code: UPF0154 protein LSL_0542 (74 aa).

Residues 5 to 25 form a helical membrane-spanning segment; sequence IWVLIVIIAAVLGFVGGFFAA.

This sequence belongs to the UPF0154 family.

Its subcellular location is the cell membrane. The polypeptide is UPF0154 protein LSL_0542 (Ligilactobacillus salivarius (strain UCC118) (Lactobacillus salivarius)).